The following is a 199-amino-acid chain: Alkyl hydroperoxide reductase C (199 aa).

Residues 2–163 enclose the Thioredoxin domain; the sequence is VLVTYPAPDF…TLRMIDALHF (162 aa). The Cysteine sulfenic acid (-SOH) intermediate role is filled by Cys-50.

It belongs to the peroxiredoxin family. AhpC/Prx1 subfamily. As to quaternary structure, homodimer; disulfide-linked, upon oxidation. 5 homodimers assemble to form a ring-like decamer.

The protein localises to the cytoplasm. The catalysed reaction is a hydroperoxide + NADH + H(+) = an alcohol + NAD(+) + H2O. Functionally, thiol-specific peroxidase that catalyzes the reduction of hydrogen peroxide and organic hydroperoxides to water and alcohols, respectively. Plays a role in cell protection against oxidative stress by detoxifying peroxides. This is Alkyl hydroperoxide reductase C from Buchnera aphidicola subsp. Baizongia pistaciae (strain Bp).